A 343-amino-acid chain; its full sequence is UDP-3-O-(3-hydroxymyristoyl)glucosamine N-acyltransferase (343 aa).

His-239 acts as the Proton acceptor in catalysis.

This sequence belongs to the transferase hexapeptide repeat family. LpxD subfamily. As to quaternary structure, homotrimer.

It carries out the reaction a UDP-3-O-[(3R)-3-hydroxyacyl]-alpha-D-glucosamine + a (3R)-hydroxyacyl-[ACP] = a UDP-2-N,3-O-bis[(3R)-3-hydroxyacyl]-alpha-D-glucosamine + holo-[ACP] + H(+). It catalyses the reaction UDP-3-O-[(3R)-3-hydroxytetradecanoyl]-alpha-D-glucosamine + (3R)-hydroxytetradecanoyl-[ACP] = UDP-2-N,3-O-bis[(3R)-3-hydroxytetradecanoyl]-alpha-D-glucosamine + holo-[ACP] + H(+). It participates in glycolipid biosynthesis; lipid IV(A) biosynthesis; lipid IV(A) from (3R)-3-hydroxytetradecanoyl-[acyl-carrier-protein] and UDP-N-acetyl-alpha-D-glucosamine: step 3/6. Functionally, catalyzes the N-acylation of UDP-3-O-(hydroxytetradecanoyl)glucosamine using 3-hydroxytetradecanoyl-ACP as the acyl donor. Is involved in the biosynthesis of lipid A, a phosphorylated glycolipid that anchors the lipopolysaccharide to the outer membrane of the cell. The sequence is that of UDP-3-O-(3-hydroxymyristoyl)glucosamine N-acyltransferase from Blochmanniella pennsylvanica (strain BPEN).